The chain runs to 921 residues: Isoleucine--tRNA ligase 1 (921 aa).

The 'HIGH' region signature appears at 57-67 (PYANGDIHMGH). Glutamate 552 lines the L-isoleucyl-5'-AMP pocket. The short motif at 593–597 (KMSKS) is the 'KMSKS' region element. Residue lysine 596 participates in ATP binding. Cysteine 888, cysteine 891, cysteine 908, and cysteine 911 together coordinate Zn(2+).

Belongs to the class-I aminoacyl-tRNA synthetase family. IleS type 1 subfamily. In terms of assembly, monomer. Zn(2+) serves as cofactor.

The protein resides in the cytoplasm. It carries out the reaction tRNA(Ile) + L-isoleucine + ATP = L-isoleucyl-tRNA(Ile) + AMP + diphosphate. Functionally, catalyzes the attachment of isoleucine to tRNA(Ile). As IleRS can inadvertently accommodate and process structurally similar amino acids such as valine, to avoid such errors it has two additional distinct tRNA(Ile)-dependent editing activities. One activity is designated as 'pretransfer' editing and involves the hydrolysis of activated Val-AMP. The other activity is designated 'posttransfer' editing and involves deacylation of mischarged Val-tRNA(Ile). This Bacillus thuringiensis subsp. konkukian (strain 97-27) protein is Isoleucine--tRNA ligase 1.